We begin with the raw amino-acid sequence, 464 residues long: NADH dehydrogenase [ubiquinone] flavoprotein 1, mitochondrial (464 aa).

A mitochondrion-targeting transit peptide spans 1 to 20; that stretch reads MLATRRLLGWSLPARVSVRF. Lys-81 is modified (N6-acetyllysine; alternate). N6-succinyllysine; alternate is present on Lys-81. 87–96 is an NADH binding site; the sequence is GRGGAGFPTG. Lys-104 carries the post-translational modification N6-acetyllysine. Residue 199–247 coordinates FMN; it reads RGAGAYICGEETALIESIEGKQGKPRLKPPFPADVGVFGCPTTVANVET. Arg-257 carries the omega-N-methylarginine modification. Lys-375 is modified (N6-acetyllysine). Residues Cys-379, Cys-382, Cys-385, and Cys-425 each coordinate [4Fe-4S] cluster.

This sequence belongs to the complex I 51 kDa subunit family. As to quaternary structure, core subunit of respiratory chain NADH dehydrogenase (Complex I) which is composed of 45 different subunits. This is a component of the flavoprotein-sulfur (FP) fragment of the enzyme. Interacts with RAB5IF. FMN serves as cofactor. Requires [4Fe-4S] cluster as cofactor.

The protein resides in the mitochondrion inner membrane. The enzyme catalyses a ubiquinone + NADH + 5 H(+)(in) = a ubiquinol + NAD(+) + 4 H(+)(out). Its function is as follows. Core subunit of the mitochondrial membrane respiratory chain NADH dehydrogenase (Complex I) which catalyzes electron transfer from NADH through the respiratory chain, using ubiquinone as an electron acceptor. Part of the peripheral arm of the enzyme, where the electrons from NADH are accepted by flavin mononucleotide (FMN) and then passed along a chain of iron-sulfur clusters by electron tunnelling to the final acceptor ubiquinone. Contains FMN, which is the initial electron acceptor as well as one iron-sulfur cluster. The protein is NADH dehydrogenase [ubiquinone] flavoprotein 1, mitochondrial of Pan troglodytes (Chimpanzee).